The chain runs to 469 residues: MSVENVLSLIQENEVKFVDLRFTDTKGKEQHISIPAHQIDADFFEDGKMFDGSSVAGWKGINESDMVMMPDPSSAVLDPFTEDATLNIRCDILEPATMQGYDRDPRSIAKRAEEYMRSTGIADTVLVGPEPEFFLFDDVKFATNMSGSFFKIDDVEAAWNTGTEYEDGNKGHRPGVKGGYFPVAPVDSSQDIRSAMCLIMEEMGLVVEAHHHEVATAGQNEIATRFNTLTTKADEIQIYKYVVHNVAHAFGKTATFMPKPLVGDNGSGMHVHQSLAKDGVNLFAGDKYGGLSETALYYIGGIIKHARALNAITNPSTNSYKRLVPHYEAPVMLAYSARNRSASIRIPVVPSPKARRIEVRFPDPAANPYLAFAAMLMAGLDGIKNKIHPGEAMDKDLYDLPAEEAAEIPKVAESLQQALQYLDADREFLTAGGVFSDDFIDSYIALKTKDVERVNVAVHPLEFELYYSV.

The region spanning 13 to 97 is the GS beta-grasp domain; the sequence is NEVKFVDLRF…IRCDILEPAT (85 aa). A GS catalytic domain is found at 105 to 469; it reads PRSIAKRAEE…PLEFELYYSV (365 aa). Glutamate 130 and glutamate 132 together coordinate Mg(2+). Glutamate 208 is a binding site for ATP. Mg(2+) is bound by residues glutamate 213 and glutamate 221. L-glutamate contacts are provided by residues 265 to 266 and glycine 266; that span reads NG. Histidine 270 contributes to the Mg(2+) binding site. Residues 272–274 and serine 274 each bind ATP; that span reads HQS. 3 residues coordinate L-glutamate: arginine 322, glutamate 328, and arginine 340. Residues arginine 340, arginine 345, and lysine 353 each contribute to the ATP site. Glutamate 358 lines the Mg(2+) pocket. Arginine 360 contributes to the L-glutamate binding site. Tyrosine 398 is modified (O-AMP-tyrosine).

The protein belongs to the glutamine synthetase family. In terms of assembly, oligomer of 12 subunits arranged in the form of two hexameric ring. Mg(2+) serves as cofactor.

Its subcellular location is the cytoplasm. The enzyme catalyses L-glutamate + NH4(+) + ATP = L-glutamine + ADP + phosphate + H(+). The activity of this enzyme could be controlled by adenylation under conditions of abundant glutamine. Catalyzes the ATP-dependent biosynthesis of glutamine from glutamate and ammonia. The protein is Glutamine synthetase (glnAv) of Vibrio cholerae serotype O1 (strain ATCC 39315 / El Tor Inaba N16961).